Consider the following 285-residue polypeptide: Probable endonuclease 4 (285 aa).

Residues histidine 67, histidine 107, glutamate 144, aspartate 178, histidine 181, histidine 215, aspartate 228, histidine 230, and glutamate 260 each contribute to the Zn(2+) site.

It belongs to the AP endonuclease 2 family. It depends on Zn(2+) as a cofactor.

It carries out the reaction Endonucleolytic cleavage to 5'-phosphooligonucleotide end-products.. In terms of biological role, endonuclease IV plays a role in DNA repair. It cleaves phosphodiester bonds at apurinic or apyrimidinic (AP) sites, generating a 3'-hydroxyl group and a 5'-terminal sugar phosphate. In Chloroflexus aurantiacus (strain ATCC 29366 / DSM 635 / J-10-fl), this protein is Probable endonuclease 4.